Reading from the N-terminus, the 193-residue chain is MSVSRETERLATYAGLLRKWNPAINLIAASTIDQIEARHIADSLHLVEIAKNAQGSWVDLGSGGGLPGIVVAIMRPDLELSMVESDQRKGAFLRNAIRELALPHAKVLCKRIEALDRLDAANLSARALAPLPQLMAYVERHLSPSGTAWLMKGRNWQAEVSQAQSDWKFDLKTHQSATDPDAAILEITGLRHA.

S-adenosyl-L-methionine is bound by residues Gly-61, Leu-66, 112 to 113, and Arg-126; that span reads IE.

The protein belongs to the methyltransferase superfamily. RNA methyltransferase RsmG family.

The protein resides in the cytoplasm. It carries out the reaction guanosine(527) in 16S rRNA + S-adenosyl-L-methionine = N(7)-methylguanosine(527) in 16S rRNA + S-adenosyl-L-homocysteine. Its function is as follows. Specifically methylates the N7 position of guanine in position 527 of 16S rRNA. This Paracoccus denitrificans (strain Pd 1222) protein is Ribosomal RNA small subunit methyltransferase G.